Here is a 142-residue protein sequence, read N- to C-terminus: Hemoglobin subunit alpha-1/2 (142 aa).

A Globin domain is found at 2–142 (VLSPADKTNI…VSTVLTSKYR (141 aa)). Phosphoserine is present on S4. K8 carries the N6-succinyllysine modification. T9 is modified (phosphothreonine). K12 is modified (N6-succinyllysine). Position 17 is an N6-acetyllysine; alternate (K17). An N6-succinyllysine; alternate modification is found at K17. Phosphotyrosine is present on Y25. N6-succinyllysine is present on K41. Residue H59 coordinates O2. H88 is a heme b binding site. S103 carries the phosphoserine modification. T109 carries the phosphothreonine modification. At S125 the chain carries Phosphoserine. A phosphothreonine mark is found at T135 and T138. S139 carries the phosphoserine modification.

Belongs to the globin family. Heterotetramer of two alpha chains and two beta chains. As to expression, red blood cells.

Functionally, involved in oxygen transport from the lung to the various peripheral tissues. This Oryctolagus cuniculus (Rabbit) protein is Hemoglobin subunit alpha-1/2.